The sequence spans 245 residues: MDGWQRAFVLHSRPWSETSLMLDVFTEESGRVRLVAKGARSKRSNLKGALQPFTPLLVRFGGRGEVKTLRSAEAVSLALPLSGITLYSGLYVNELISRVLEHETRFSELFFDYLHCIQALAGASGSPEPALRRFELALLGHLGYGVDFLHCAGSGEPVDDTMTYRYREEKGFIASLVIDNNTFTGHHLKALASREFPDVDTLRAAKRFTRIALKPYLGGKPLKSRELFRQFMPARKARADNTNND.

The protein belongs to the RecO family.

Involved in DNA repair and RecF pathway recombination. This chain is DNA repair protein RecO, found in Klebsiella pneumoniae subsp. pneumoniae (strain ATCC 700721 / MGH 78578).